The sequence spans 256 residues: 4-oxalocrotonate decarboxylase (256 aa).

Belongs to the hydratase/decarboxylase family. Forms a complex with AmnF. Mg(2+) is required as a cofactor. The cofactor is Mn(2+).

The enzyme catalyses (3E)-2-oxohex-3-enedioate + H(+) = 2-oxopent-4-enoate + CO2. With respect to regulation, strongly inhibited by Fe(2+), Fe(3+), K(3)[Fe(CN)(6)], Ag(+) and Cu(2+). Involved in the modified meta-cleavage pathway for the 2-aminophenol catabolism. This is 4-oxalocrotonate decarboxylase (amnE) from Pseudomonas sp.